The primary structure comprises 577 residues: Endopolyphosphatase (577 aa).

The Cytoplasmic segment spans residues 1–2 (MR). The chain crosses the membrane as a helical; Signal-anchor for type II membrane protein span at residues 3–23 (PSVITVAVLFVQSTWASFAFG). Residues 24–577 (NPMSMRNKAH…YIGSISDFED (554 aa)) lie on the Vacuolar side of the membrane. N-linked (GlcNAc...) asparagine glycosylation is found at asparagine 363, asparagine 370, asparagine 375, and asparagine 399. The segment at 430-460 (SDYEIDKKKKKKKKNNKKKKKNKRKNIKPGP) is disordered. The segment covering 437–456 (KKKKKKKNNKKKKKNKRKNI) has biased composition (basic residues). Asparagine 481 carries N-linked (GlcNAc...) asparagine glycosylation.

It belongs to the endopolyphosphatase PPN1 family. The cofactor is a divalent metal cation. Processing by proteases in the vacuole may be required for activation.

Its subcellular location is the vacuole membrane. The catalysed reaction is [phosphate](n+1) + n H2O = (n+1) phosphate + n H(+). Catalyzes the hydrolysis of inorganic polyphosphate (polyP) chains of many hundreds of phosphate residues into shorter lengths. The sequence is that of Endopolyphosphatase (ppn1) from Schizosaccharomyces pombe (strain 972 / ATCC 24843) (Fission yeast).